The sequence spans 526 residues: Glutamate--cysteine ligase (526 aa).

This sequence belongs to the glutamate--cysteine ligase type 1 family. Type 1 subfamily.

It catalyses the reaction L-cysteine + L-glutamate + ATP = gamma-L-glutamyl-L-cysteine + ADP + phosphate + H(+). Its pathway is sulfur metabolism; glutathione biosynthesis; glutathione from L-cysteine and L-glutamate: step 1/2. In Shewanella amazonensis (strain ATCC BAA-1098 / SB2B), this protein is Glutamate--cysteine ligase.